The following is a 2381-amino-acid chain: Protein Ycf2 (2381 aa).

1655-1662 contacts ATP; that stretch reads GPMETGRS.

Belongs to the Ycf2 family.

The protein resides in the plastid. It is found in the chloroplast stroma. Probable ATPase of unknown function. Its presence in a non-photosynthetic plant (Epifagus virginiana) and experiments in tobacco indicate that it has an essential function which is probably not related to photosynthesis. The chain is Protein Ycf2 from Angiopteris evecta (Mule's foot fern).